Here is a 603-residue protein sequence, read N- to C-terminus: Flavin-dependent halogenase chlA (603 aa).

Residues Gly-16, Ala-19, and Glu-59 each contribute to the FAD site. Chloride-binding residues include Thr-352 and Gly-353.

The protein belongs to the flavin-dependent halogenase family.

The enzyme catalyses 2,4,6-trihydroxyphenylhexan-1-one + FADH2 + chloride + O2 = (3-chloro-2,4,6-trihydroxyphenyl)hexan-1-one + FAD + 2 H2O + H(+). The catalysed reaction is (3-chloro-2,4,6-trihydroxyphenyl)hexan-1-one + FADH2 + chloride + O2 = (3,5-dichloro-2,4,6-trihydroxyphenyl)hexan-1-one + FAD + 2 H2O. Functionally, flavin-dependent halogenase; part of the gene cluster that mediates the biosynthesis of DIF-1 (Differentiation Inducing Factor-1), a signal molecule involved in the differentiation of pstO (prestalk-O) cells. The three-step process begins with the formation of (2,4,6-trihydroxyphenyl)-1-hexan-1-one (THPH) by the polyketide synthase StlB. THPH is then dichlorinated by the flavin-dependent halogenase ChlA. The last step of DIF-1 biosynthesis is the O-methylation of dichloro-THPH (or des-methyl-DIF-1) by the methyltransferase DmtA to yield DIF-1. This Dictyostelium discoideum (Social amoeba) protein is Flavin-dependent halogenase chlA.